A 562-amino-acid chain; its full sequence is NAD-dependent malic enzyme (562 aa).

The active-site Proton donor is the Y101. Residue R154 coordinates NAD(+). The active-site Proton acceptor is K172. Residues E243, D244, and D267 each contribute to the a divalent metal cation site. Positions 267 and 415 each coordinate NAD(+).

The protein belongs to the malic enzymes family. In terms of assembly, homotetramer. Mg(2+) serves as cofactor. Mn(2+) is required as a cofactor.

It catalyses the reaction (S)-malate + NAD(+) = pyruvate + CO2 + NADH. The enzyme catalyses oxaloacetate + H(+) = pyruvate + CO2. The sequence is that of NAD-dependent malic enzyme from Shewanella oneidensis (strain ATCC 700550 / JCM 31522 / CIP 106686 / LMG 19005 / NCIMB 14063 / MR-1).